The sequence spans 247 residues: ATP synthase subunit a, chloroplastic (247 aa).

5 helical membrane-spanning segments follow: residues 38-58, 95-115, 134-154, 199-219, and 220-240; these read QVLITSWVVITILLGSVIIAV, VPFIGTMFLFIFVSNWSGALL, INTTVALALLTSAAYFYAGLS, LVVVVLVSLVPLVVPIPVMFL, and GLFTSGIQALIFATLAAAYIG.

It belongs to the ATPase A chain family. F-type ATPases have 2 components, CF(1) - the catalytic core - and CF(0) - the membrane proton channel. CF(1) has five subunits: alpha(3), beta(3), gamma(1), delta(1), epsilon(1). CF(0) has four main subunits: a, b, b' and c.

The protein localises to the plastid. It localises to the chloroplast thylakoid membrane. Its function is as follows. Key component of the proton channel; it plays a direct role in the translocation of protons across the membrane. The sequence is that of ATP synthase subunit a, chloroplastic from Zea mays (Maize).